Consider the following 634-residue polypeptide: Factor of DNA methylation 5 (634 aa).

A coiled-coil region spans residues 254–469 (IVVDDLANKI…EDTNSALMVK (216 aa)).

Its function is as follows. Acts in association with FDM3 and FDM4 for RNA-directed DNA methylation (RdDM). In Arabidopsis thaliana (Mouse-ear cress), this protein is Factor of DNA methylation 5.